The sequence spans 352 residues: Macrophage-capping protein (352 aa).

At methionine 1 the chain carries N-acetylmethionine. One copy of the Gelsolin-like 1 repeat lies at 27–75 (EKLKPVPIARESHGIFFSGDSYLVLHNGPEEASHLHLWIGQQSSRDEQG). Residues 139-148 (RKLYQVKGKK) carry the Nuclear localization signal motif. 2 Gelsolin-like repeats span residues 150 to 190 (IRAT…LERN) and 265 to 311 (MNLT…KERQ). Residue serine 341 is modified to Phosphoserine.

The protein belongs to the villin/gelsolin family. Interacts with NUP62. Interacts with NUTF2 and RAN; involved in CAPG nuclear import. Post-translationally, phosphorylated. Nuclear GCAP39 is more highly phosphorylated than cytoplasmic GCAP39. In terms of tissue distribution, present in a large variety of tissues and is particularly abundant in kidney and lung. Highly expressed in macrophages (at protein level).

The protein resides in the nucleus. It localises to the cytoplasm. It is found in the melanosome. The protein localises to the cell projection. Its subcellular location is the lamellipodium. The protein resides in the ruffle. Calcium-sensitive protein which reversibly blocks the barbed ends of actin filaments but does not sever preformed actin filaments. May play an important role in macrophage function. May play a role in regulating cytoplasmic and/or nuclear structures through potential interactions with actin. May bind DNA. Uncapping occurs either when Ca(2+) falls or when the concentration of polyphosphoinositide rises, both at low and high Ca(2+). The sequence is that of Macrophage-capping protein (Capg) from Mus musculus (Mouse).